Consider the following 341-residue polypeptide: MKALSKLKAEEGIWMTDVPEPEVGHNDLLIKIRKTAICGTDVHIYNWDEWSQKTIPVPMVVGHEYVGEVVGIGQEVRGFKIGDRVSGEGHITCGHCRNCRAGRTHLCRNTIGVGVNRPGCFAEYLVIPAFNAFKIPDNISDDLASIFDPFGNAVHTALSFDLVGEDVLVSGAGPIGVMAAAVAKHVGARNVVITDVNEYRLELARKMGVTRAVNVAKENLNDVMAELGMTEGFDVGLEMSGAPPAFRSMLDTMNHGGRIAMLGIPPSDMSIDWTKVIFKGLFIKGIYGREMFETWYKMAALIQSGLDLSPIITHRFGIDDFQKGFDAMRSGQSGKVVLSWD.

Position 38 (C38) interacts with Zn(2+). Active-site charge relay system residues include T40 and H43. Residues H63, E64, C93, C96, C99, and C107 each coordinate Zn(2+). NAD(+)-binding positions include I175, D195, R200, 262–264, and 286–287; these read LGI and IY.

The protein belongs to the zinc-containing alcohol dehydrogenase family. In terms of assembly, homotetramer. Zn(2+) is required as a cofactor.

The protein localises to the cytoplasm. It catalyses the reaction L-threonine + NAD(+) = (2S)-2-amino-3-oxobutanoate + NADH + H(+). It functions in the pathway amino-acid degradation; L-threonine degradation via oxydo-reductase pathway; glycine from L-threonine: step 1/2. Its function is as follows. Catalyzes the NAD(+)-dependent oxidation of L-threonine to 2-amino-3-ketobutyrate. The chain is L-threonine 3-dehydrogenase from Klebsiella pneumoniae subsp. pneumoniae (strain ATCC 700721 / MGH 78578).